The following is a 687-amino-acid chain: Hemin receptor (687 aa).

An N-terminal signal peptide occupies residues 1–28 (MPRSTSDRFRWSPLSLAIACTLSLAVQA). The short motif at 44–51 (DTMVVTAT) is the TonB box element. The 112-residue stretch at 56 to 167 (SSFEAPMMVT…LGGVISYETV (112 aa)) folds into the TBDR plug domain. One can recognise a TBDR beta-barrel domain in the interval 178 to 687 (NSGYRVYSAA…NAKFFVSYQW (510 aa)). Residues 319-338 (ARPQGTPEEGRKQTTKGGKL) form a disordered region. Residues 326-338 (EEGRKQTTKGGKL) are compositionally biased toward basic and acidic residues. The short motif at 670–687 (QGVPQDGRNAKFFVSYQW) is the TonB C-terminal box element.

The protein belongs to the TonB-dependent receptor family.

Its subcellular location is the cell outer membrane. Its function is as follows. This protein is involved in the initial step of iron uptake by binding hemin, an iron chelatin siderophore that allows the bacteria to extract iron from the environment. The protein is Hemin receptor (hemR) of Yersinia enterocolitica.